The chain runs to 796 residues: Cadherin-11 (796 aa).

The first 24 residues, 1–24, serve as a signal peptide directing secretion; that stretch reads MKENYCLQAALVCLSMLYHSQAFA. The propeptide occupies 25–53; it reads LERRSHLHPSFHGHHEKGKEGQVLQRSKR. 5 consecutive Cadherin domains span residues 54–159, 160–268, 269–383, 384–486, and 487–612; these read GWVW…PPEF, LHEI…PPKF, PQSV…PPMF, LAPS…DNAP, and KFAA…YILN. Residues 54-617 lie on the Extracellular side of the membrane; that stretch reads GWVWNQFFVI…AYILNAGLST (564 aa). N-linked (GlcNAc...) asparagine glycosylation is found at asparagine 455 and asparagine 540. Residues 618–640 traverse the membrane as a helical segment; that stretch reads GALIAILACIVILLVIVVLFVTL. Topologically, residues 641-796 are cytoplasmic; the sequence is RRQKKEPLIV…GSKDTFDDDS (156 aa). Serine 788 carries the post-translational modification Phosphoserine. Phosphothreonine is present on threonine 791.

As to quaternary structure, interacts with PCDH8. As to expression, selectively expressed in osteoblastic cell lines, precursor cell lines of osteoblasts, and primary osteoblastic cells from calvaria, as well as in lung, testis, and brain tissues at low levels.

It localises to the cell membrane. Its function is as follows. Cadherins are calcium-dependent cell adhesion proteins. They preferentially interact with themselves in a homophilic manner in connecting cells; cadherins may thus contribute to the sorting of heterogeneous cell types. Required for proper focal adhesion assembly. Involved in the regulation of cell migration. The polypeptide is Cadherin-11 (Cdh11) (Mus musculus (Mouse)).